The sequence spans 281 residues: MEMO1 family protein PAE0818 (281 aa).

The protein belongs to the MEMO1 family.

This Pyrobaculum aerophilum (strain ATCC 51768 / DSM 7523 / JCM 9630 / CIP 104966 / NBRC 100827 / IM2) protein is MEMO1 family protein PAE0818.